The sequence spans 414 residues: Paired box protein Pax-2 (414 aa).

A DNA-binding region (paired) is located at residues Arg15–Lys141. Residues Gly18–Thr74 form a PAI subdomain region. The segment at Lys93–Lys141 is RED subdomain. Phosphothreonine is present on Thr225.

Interacts with ELGN3; the interaction targets PAX2 for destruction. Interacts with TLE4. Kidney and nephrogenic rests.

It is found in the nucleus. Functionally, transcription factor that may have a role in kidney cell differentiation. In Mus musculus (Mouse), this protein is Paired box protein Pax-2 (Pax2).